Consider the following 289-residue polypeptide: Cbb3-type cytochrome c oxidase subunit FixP (289 aa).

Residues 1–33 lie on the Cytoplasmic side of the membrane; it reads MADKHKHVDEVSGVETTGHEWDGIRELNNPLPR. Residues 34-56 traverse the membrane as a helical segment; that stretch reads WWVYSFYATIIWAIGYAVAYPSW. Residues 57 to 289 are Periplasmic-facing; it reads PMLTEATKGV…VFVHSLGGGE (233 aa). 2 consecutive Cytochrome c domains span residues 110 to 198 and 205 to 286; these read FAVS…MSLT and HLVE…HSLG. Heme c is bound by residues Cys123, Cys126, His127, Met175, Cys218, Cys221, His222, and Met263.

This sequence belongs to the CcoP / FixP family. Component of the cbb3-type cytochrome c oxidase at least composed of FixN, FixO, FixQ and FixP. The cofactor is heme c.

The protein resides in the cell inner membrane. Its pathway is energy metabolism; oxidative phosphorylation. In terms of biological role, C-type cytochrome. Part of the cbb3-type cytochrome c oxidase complex. FixP subunit is required for transferring electrons from donor cytochrome c via its heme groups to FixO subunit. From there, electrons are shuttled to the catalytic binuclear center of FixN subunit where oxygen reduction takes place. The complex also functions as a proton pump. In Sinorhizobium medicae (strain WSM419) (Ensifer medicae), this protein is Cbb3-type cytochrome c oxidase subunit FixP.